The sequence spans 102 residues: Small ribosomal subunit protein uS14 (102 aa).

This sequence belongs to the universal ribosomal protein uS14 family. As to quaternary structure, part of the 30S ribosomal subunit. Contacts proteins S3 and S10.

Functionally, binds 16S rRNA, required for the assembly of 30S particles and may also be responsible for determining the conformation of the 16S rRNA at the A site. The sequence is that of Small ribosomal subunit protein uS14 from Wolbachia sp. subsp. Brugia malayi (strain TRS).